A 217-amino-acid chain; its full sequence is Adenylate kinase (217 aa).

Position 10–15 (10–15 (GAGKGT)) interacts with ATP. The interval 30-59 (STGDILRAAVSEMTPMGVKAKGYMESGALV) is NMP. Residues Thr-31, Arg-36, 57 to 59 (ALV), 85 to 88 (GFPR), and Gln-92 each bind AMP. The segment at 126–163 (GRRTCRLCGKGYHVVFDPPRVSGRCDECLGELFQRDDD) is LID. Arg-127 contributes to the ATP binding site. Cys-130, Cys-133, Cys-150, and Cys-153 together coordinate Zn(2+). 2 residues coordinate AMP: Arg-160 and Arg-171. Gly-199 lines the ATP pocket.

This sequence belongs to the adenylate kinase family. In terms of assembly, monomer.

Its subcellular location is the cytoplasm. The catalysed reaction is AMP + ATP = 2 ADP. It functions in the pathway purine metabolism; AMP biosynthesis via salvage pathway; AMP from ADP: step 1/1. In terms of biological role, catalyzes the reversible transfer of the terminal phosphate group between ATP and AMP. Plays an important role in cellular energy homeostasis and in adenine nucleotide metabolism. The sequence is that of Adenylate kinase from Geotalea uraniireducens (strain Rf4) (Geobacter uraniireducens).